The sequence spans 78 residues: Pigment-dispersing hormone peptides (78 aa).

The signal sequence occupies residues 1–22 (MRSAVIVTMLVVVALAALLTQG). Ala-75 is subject to Alanine amide.

It belongs to the arthropod PDH family. Expressed in eyestalk tissue and cerebral ganglia.

It localises to the secreted. In terms of biological role, the pigment-dispersing hormone causes the migration of the distal retinal pigment into the proximal end of the pigment chromatophore cells and thus decreases the amount of light entering the retinulas. May also function as a neurotransmitter and/or neuromodulator. The chain is Pigment-dispersing hormone peptides from Carcinus maenas (Common shore crab).